Reading from the N-terminus, the 392-residue chain is MEERTRAYLRGRFGDHYRQASVTPPPAANEREWGFIPWTEGPGETMVRHRSLLDLGEIEDFLGRRKPRHVYFSAGRYDEPSASTMSDKGWRSSDLVFDLDADHLPSVVLGEDSYAEMLAKCKDALRRLLDFLEDDFGFDDLTIVFSGGRGYHVHVRDERIRHLERDARREVVDYVRGIGLEFDELVDEESVAGTAGRSSPAQKRTLSTEGGWSARAHRHMLAVVDDLLAMEEADALEQLQEYDGIGEGKATAALNAARSNYEQLEAGNIDVHPAFYQLAKILLHEVVAADNAPIDEPVTTDTNRLIRLPGSLHGGSGLEVQRIDRDDLDAFDPLVDPVPETFRGHDITVEVTDGGLVELDGDSFTLEAGNQTVPEHVGVFLMARGRAEKGKE.

Catalysis depends on residues aspartate 98, aspartate 100, and aspartate 295.

Belongs to the eukaryotic-type primase small subunit family. As to quaternary structure, heterodimer of a small subunit (PriS) and a large subunit (PriL). Requires Mg(2+) as cofactor. Mn(2+) is required as a cofactor.

Its function is as follows. Catalytic subunit of DNA primase, an RNA polymerase that catalyzes the synthesis of short RNA molecules used as primers for DNA polymerase during DNA replication. The small subunit contains the primase catalytic core and has DNA synthesis activity on its own. Binding to the large subunit stabilizes and modulates the activity, increasing the rate of DNA synthesis while decreasing the length of the DNA fragments, and conferring RNA synthesis capability. The DNA polymerase activity may enable DNA primase to also catalyze primer extension after primer synthesis. May also play a role in DNA repair. The polypeptide is DNA primase small subunit PriS (Haloarcula marismortui (strain ATCC 43049 / DSM 3752 / JCM 8966 / VKM B-1809) (Halobacterium marismortui)).